The chain runs to 578 residues: Sulfite reductase [NADPH] hemoprotein beta-component (578 aa).

The disordered stretch occupies residues 1–21 (MTNTLAGPDRSRDISQPLEKL). Residues Cys443, Cys449, Cys488, and Cys492 each contribute to the [4Fe-4S] cluster site. Cys492 serves as a coordination point for siroheme.

It belongs to the nitrite and sulfite reductase 4Fe-4S domain family. Alpha(8)-beta(8). The alpha component is a flavoprotein, the beta component is a hemoprotein. Siroheme is required as a cofactor. [4Fe-4S] cluster serves as cofactor.

It carries out the reaction hydrogen sulfide + 3 NADP(+) + 3 H2O = sulfite + 3 NADPH + 4 H(+). It functions in the pathway sulfur metabolism; hydrogen sulfide biosynthesis; hydrogen sulfide from sulfite (NADPH route): step 1/1. Component of the sulfite reductase complex that catalyzes the 6-electron reduction of sulfite to sulfide. This is one of several activities required for the biosynthesis of L-cysteine from sulfate. This Methylocella silvestris (strain DSM 15510 / CIP 108128 / LMG 27833 / NCIMB 13906 / BL2) protein is Sulfite reductase [NADPH] hemoprotein beta-component.